Reading from the N-terminus, the 335-residue chain is Glyceraldehyde-3-phosphate dehydrogenase (335 aa).

NAD(+)-binding positions include 12-13 (RI), aspartate 34, arginine 78, and serine 120. D-glyceraldehyde 3-phosphate contacts are provided by residues 151-153 (SCT) and threonine 182. Cysteine 152 (nucleophile) is an active-site residue. Residue asparagine 183 coordinates NAD(+). Residues arginine 197, 210-211 (TG), and arginine 233 contribute to the D-glyceraldehyde 3-phosphate site. Residue asparagine 315 participates in NAD(+) binding.

The protein belongs to the glyceraldehyde-3-phosphate dehydrogenase family. Homotetramer.

It is found in the cytoplasm. The enzyme catalyses D-glyceraldehyde 3-phosphate + phosphate + NAD(+) = (2R)-3-phospho-glyceroyl phosphate + NADH + H(+). It functions in the pathway carbohydrate degradation; glycolysis; pyruvate from D-glyceraldehyde 3-phosphate: step 1/5. Catalyzes the oxidative phosphorylation of glyceraldehyde 3-phosphate (G3P) to 1,3-bisphosphoglycerate (BPG) using the cofactor NAD. The first reaction step involves the formation of a hemiacetal intermediate between G3P and a cysteine residue, and this hemiacetal intermediate is then oxidized to a thioester, with concomitant reduction of NAD to NADH. The reduced NADH is then exchanged with the second NAD, and the thioester is attacked by a nucleophilic inorganic phosphate to produce BPG. This Geobacillus stearothermophilus (Bacillus stearothermophilus) protein is Glyceraldehyde-3-phosphate dehydrogenase (gap).